The chain runs to 193 residues: NAD(P)H-quinone oxidoreductase subunit I (193 aa).

4Fe-4S ferredoxin-type domains lie at 55-84 (GRIH…VDWE) and 95-124 (KHYS…VTEE). [4Fe-4S] cluster-binding residues include Cys64, Cys67, Cys70, Cys74, Cys104, Cys107, Cys110, and Cys114.

Belongs to the complex I 23 kDa subunit family. As to quaternary structure, NDH-1 is composed of at least 11 different subunits. [4Fe-4S] cluster is required as a cofactor.

Its subcellular location is the cellular thylakoid membrane. The catalysed reaction is a plastoquinone + NADH + (n+1) H(+)(in) = a plastoquinol + NAD(+) + n H(+)(out). It catalyses the reaction a plastoquinone + NADPH + (n+1) H(+)(in) = a plastoquinol + NADP(+) + n H(+)(out). In terms of biological role, NDH-1 shuttles electrons from an unknown electron donor, via FMN and iron-sulfur (Fe-S) centers, to quinones in the respiratory and/or the photosynthetic chain. The immediate electron acceptor for the enzyme in this species is believed to be plastoquinone. Couples the redox reaction to proton translocation, and thus conserves the redox energy in a proton gradient. In Cyanothece sp. (strain PCC 7425 / ATCC 29141), this protein is NAD(P)H-quinone oxidoreductase subunit I.